A 608-amino-acid polypeptide reads, in one-letter code: Signal transduction histidine-protein kinase AtoS (608 aa).

Over 1-15 (MHYMKWIYPRRLRNQ) the chain is Cytoplasmic. A helical transmembrane segment spans residues 16–36 (MILMAILMVIVPTLTIGYIVE). Residues 37-189 (TEGRSAVLSE…DIRRQAWKMD (153 aa)) are Periplasmic-facing. Residues 190–210 (VRIIIVLTAGLLISLLLIVLF) traverse the membrane as a helical segment. At 211–608 (SRRLSANIDI…PINPQGNQTV (398 aa)) the chain is on the cytoplasmic side. Positions 212-262 (RRLSANIDIITDGLSTLAQNIPTRLPQLPGEMGQISQSVNNLAQALRETRT) constitute an HAMP domain. Residues 260–305 (TRTLNDLIIENAADGVIAIDRQGDVTTMNPAAEVITGYQRHELVGQ) enclose the PAS domain. Residues 326-382 (HGTEHVALEISFPGRDRTIELSVTTSRIHNTHGEMIGALVIFSDLTARKETQRRMAQ) form the PAC domain. The region spanning 395 to 602 (GVAHEVRNPL…TFTLILPINP (208 aa)) is the Histidine kinase domain. H398 is subject to Phosphohistidine; by autocatalysis.

In terms of assembly, homodimer. Post-translationally, autophosphorylated. Each AtoS molecule may phosphorylate its partner within the dimer rather than phosphorylating itself.

It localises to the cell inner membrane. The catalysed reaction is ATP + protein L-histidine = ADP + protein N-phospho-L-histidine.. Its function is as follows. Member of the two-component regulatory system AtoS/AtoC. In the presence of acetoacetate, AtoS/AtoC stimulates the expression of the atoDAEB operon, leading to short chain fatty acid catabolism and activation of the poly-(R)-3-hydroxybutyrate (cPHB) biosynthetic pathway. Also induces the operon in response to spermidine. Involved in the regulation of motility and chemotaxis, via transcriptional induction of the flagellar regulon. AtoS is a membrane-associated kinase that phosphorylates and activates AtoC in response to environmental signals. The chain is Signal transduction histidine-protein kinase AtoS (atoS) from Escherichia coli (strain K12).